Reading from the N-terminus, the 344-residue chain is S-methyl-5'-thioadenosine phosphorylase (344 aa).

Residues threonine 51, arginine 99 to histidine 100, and serine 132 to alanine 133 contribute to the phosphate site. Methionine 234 is a binding site for substrate. Residue serine 235 participates in phosphate binding. Aspartate 258–aspartate 260 serves as a coordination point for substrate.

Belongs to the PNP/MTAP phosphorylase family. MTAP subfamily. As to quaternary structure, homotrimer.

Its subcellular location is the cytoplasm. The protein resides in the nucleus. It catalyses the reaction S-methyl-5'-thioadenosine + phosphate = 5-(methylsulfanyl)-alpha-D-ribose 1-phosphate + adenine. The protein operates within amino-acid biosynthesis; L-methionine biosynthesis via salvage pathway; S-methyl-5-thio-alpha-D-ribose 1-phosphate from S-methyl-5'-thioadenosine (phosphorylase route): step 1/1. In terms of biological role, catalyzes the reversible phosphorylation of S-methyl-5'-thioadenosine (MTA) to adenine and 5-methylthioribose-1-phosphate. Involved in the breakdown of MTA, a major by-product of polyamine biosynthesis. Responsible for the first step in the methionine salvage pathway after MTA has been generated from S-adenosylmethionine. Has broad substrate specificity with 6-aminopurine nucleosides as preferred substrates. The chain is S-methyl-5'-thioadenosine phosphorylase from Phaeosphaeria nodorum (strain SN15 / ATCC MYA-4574 / FGSC 10173) (Glume blotch fungus).